The sequence spans 1114 residues: Constitutive coactivator of PPAR-gamma-like protein 1 (1114 aa).

The interaction with YES1, SRC and FYN stretch occupies residues 339–402 (PPHYLARPNP…YNLAEPALTL (64 aa)). 2 disordered regions span residues 372 to 396 (QAKPVAPQVPSPGAPGQGPHPYNLA) and 411 to 519 (EQNY…GNQI). Residues 431–443 (SPINPAPSGSPNH) are compositionally biased toward polar residues. The segment covering 477 to 498 (GWEKTGSHSEPQARGDPGDQTK) has biased composition (basic and acidic residues). Over residues 499-510 (AEGSSTASSGSQ) the composition is skewed to polar residues. A Phosphothreonine modification is found at Thr-651. The segment at 825 to 1114 (AEQAAKVEKM…LEAAVLKKEE (290 aa)) is RNA binding. Arg-869, Arg-880, and Arg-882 each carry omega-N-methylarginine. The tract at residues 918 to 940 (FSGSDSSRTSKSQGGIQPIPSQG) is disordered. Residue Lys-928 is modified to N6-acetyllysine. Residues 929–940 (SQGGIQPIPSQG) show a composition bias toward low complexity. At Ser-956 the chain carries Phosphoserine. 2 positions are modified to omega-N-methylarginine: Arg-978 and Arg-982. The disordered stretch occupies residues 1009 to 1099 (AIQGKPPYAA…LNALSTDSGC (91 aa)). Ser-1019 bears the Phosphoserine mark. Residues 1022-1033 (EVAKELKSRSGE) show a composition bias toward basic and acidic residues. The span at 1034-1043 (SKSSAMSSDG) shows a compositional bias: polar residues. Phosphoserine occurs at positions 1040, 1041, and 1044. Over residues 1060–1097 (MNGSAGDTRAPSHSESALNNDSKTCNTNPHLNALSTDS) the composition is skewed to polar residues.

It belongs to the constitutive coactivator of PPAR-gamma family. Interacts with PURA. Interacts with YES1, SRC, FYN. Upon tyrosine phosphorylation, interacts with PIK3R1. Post-translationally, arg-978 is dimethylated, probably to asymmetric dimethylarginine. In terms of processing, phosphorylated on tyrosine by src family kinases upon ultraviolet exposure.

The protein resides in the cytoplasm. It localises to the cell membrane. Functionally, component of the oxidative stress-induced survival signaling. May regulate the activation of SRC family protein kinases. May act as a scaffolding protein enabling SRC family protein kinases to phosphorylate and activate PI3-kinase. Binds IGF2 RNA and promotes the production of IGF2 protein. This chain is Constitutive coactivator of PPAR-gamma-like protein 1 (FAM120A), found in Bos taurus (Bovine).